A 291-amino-acid chain; its full sequence is Ribosomal RNA small subunit methyltransferase H (291 aa).

S-adenosyl-L-methionine contacts are provided by residues 36-38 (GGH), aspartate 55, leucine 88, aspartate 102, and glutamine 109. Residues 268-291 (KPTQEETKNNPRARSAKLRVAERI) are disordered.

It belongs to the methyltransferase superfamily. RsmH family.

Its subcellular location is the cytoplasm. It catalyses the reaction cytidine(1402) in 16S rRNA + S-adenosyl-L-methionine = N(4)-methylcytidine(1402) in 16S rRNA + S-adenosyl-L-homocysteine + H(+). Specifically methylates the N4 position of cytidine in position 1402 (C1402) of 16S rRNA. The chain is Ribosomal RNA small subunit methyltransferase H from Thermosipho melanesiensis (strain DSM 12029 / CIP 104789 / BI429).